The chain runs to 328 residues: D-cysteine desulfhydrase (328 aa).

An N6-(pyridoxal phosphate)lysine modification is found at lysine 51.

It belongs to the ACC deaminase/D-cysteine desulfhydrase family. In terms of assembly, homodimer. Pyridoxal 5'-phosphate serves as cofactor.

The catalysed reaction is D-cysteine + H2O = hydrogen sulfide + pyruvate + NH4(+) + H(+). Functionally, catalyzes the alpha,beta-elimination reaction of D-cysteine and of several D-cysteine derivatives. It could be a defense mechanism against D-cysteine. The protein is D-cysteine desulfhydrase of Shigella sonnei (strain Ss046).